Consider the following 241-residue polypeptide: VKSTNLMAFVATKMLERQEDLDTCTEMQVEKMKTSTKARLKTESSFAPRTWEDAIKDGELLFNGTILQAESPTMTPASVEMKGKKLPIDFAPSNIAPIGQNPIYLSPCIPNFDGNVWEATMYHHRGATLTKTMNCNCFQRTIWCHPNPSRMRLSYAFVLYCRNTKKICGYLIARQVAGIETGIRKCFRCIKSGFVMATDEISLTILQSIKSGAQLDPYWGNETPDIDKTEAYMLSLREAGP.

The protein resides in the host cytoplasm. The protein localises to the host nucleus. Suppresses the RNA silencing-based antiviral response in Drosophila cells. This chain is Non-structural protein 1 (NS), found in Influenza C virus (strain C/Mississippi/1980).